The following is a 209-amino-acid chain: CASP-like protein 2A1 (209 aa).

The Cytoplasmic segment spans residues 1 to 38 (MSKMAEEKVLAAPATVDGGMQSSGDLQASSAAAARVRP). The helical transmembrane segment at 39–59 (VETLLRAAPLGLCVAAMAIML) threads the bilayer. At 60–80 (RNSVTNEYGTVSYSDLGGFKY) the chain is on the extracellular side. A helical membrane pass occupies residues 81–101 (LVYANGLCAAYSLASAFYIAV). Residues 102–109 (PRPATLSR) lie on the Cytoplasmic side of the membrane. A helical transmembrane segment spans residues 110 to 130 (SWVVFLLDQVFTYLILAAGAA). The Extracellular portion of the chain corresponds to 131 to 163 (SAELLYLAYNGDKEVTWSEACGVFGGFCRQART). Residues 164–184 (SVAITFASVACYILLSLISSY) form a helical membrane-spanning segment. The Cytoplasmic portion of the chain corresponds to 185–209 (RLFSAYDPPQPSLGNKGVEIAAFPR).

The protein belongs to the Casparian strip membrane proteins (CASP) family. As to quaternary structure, homodimer and heterodimers.

The protein resides in the cell membrane. The protein is CASP-like protein 2A1 of Oryza sativa subsp. indica (Rice).